The chain runs to 312 residues: Glycine--tRNA ligase alpha subunit (312 aa).

The protein belongs to the class-II aminoacyl-tRNA synthetase family. Tetramer of two alpha and two beta subunits.

The protein localises to the cytoplasm. The catalysed reaction is tRNA(Gly) + glycine + ATP = glycyl-tRNA(Gly) + AMP + diphosphate. This chain is Glycine--tRNA ligase alpha subunit, found in Delftia acidovorans (strain DSM 14801 / SPH-1).